We begin with the raw amino-acid sequence, 211 residues long: Large ribosomal subunit protein uL3 (211 aa).

Belongs to the universal ribosomal protein uL3 family. In terms of assembly, part of the 50S ribosomal subunit. Forms a cluster with proteins L14 and L19.

Its function is as follows. One of the primary rRNA binding proteins, it binds directly near the 3'-end of the 23S rRNA, where it nucleates assembly of the 50S subunit. This is Large ribosomal subunit protein uL3 from Akkermansia muciniphila (strain ATCC BAA-835 / DSM 22959 / JCM 33894 / BCRC 81048 / CCUG 64013 / CIP 107961 / Muc).